Reading from the N-terminus, the 943-residue chain is UvrABC system protein A (943 aa).

G32–S39 lines the ATP pocket. The C4-type zinc-finger motif lies at C251 to C278. 2 ABC transporter domains span residues W308–I589 and G609–K937. G641–S648 lines the ATP pocket. The segment at C740–C766 adopts a C4-type zinc-finger fold.

The protein belongs to the ABC transporter superfamily. UvrA family. In terms of assembly, forms a heterotetramer with UvrB during the search for lesions.

The protein resides in the cytoplasm. The UvrABC repair system catalyzes the recognition and processing of DNA lesions. UvrA is an ATPase and a DNA-binding protein. A damage recognition complex composed of 2 UvrA and 2 UvrB subunits scans DNA for abnormalities. When the presence of a lesion has been verified by UvrB, the UvrA molecules dissociate. This is UvrABC system protein A from Streptococcus pneumoniae serotype 4 (strain ATCC BAA-334 / TIGR4).